The chain runs to 130 residues: Small ribosomal subunit protein uS8 (130 aa).

Belongs to the universal ribosomal protein uS8 family. As to quaternary structure, part of the 30S ribosomal subunit.

Its function is as follows. One of the primary rRNA binding proteins, it binds directly to 16S rRNA central domain where it helps coordinate assembly of the platform of the 30S subunit. This Methanothermobacter thermautotrophicus (strain ATCC 29096 / DSM 1053 / JCM 10044 / NBRC 100330 / Delta H) (Methanobacterium thermoautotrophicum) protein is Small ribosomal subunit protein uS8.